A 462-amino-acid polypeptide reads, in one-letter code: Phosphoglucosamine mutase (462 aa).

The active-site Phosphoserine intermediate is the Ser111. Mg(2+) contacts are provided by Ser111, Asp250, Asp252, and Asp254. Ser111 carries the post-translational modification Phosphoserine.

It belongs to the phosphohexose mutase family. Requires Mg(2+) as cofactor. Activated by phosphorylation.

It catalyses the reaction alpha-D-glucosamine 1-phosphate = D-glucosamine 6-phosphate. In terms of biological role, catalyzes the conversion of glucosamine-6-phosphate to glucosamine-1-phosphate. This chain is Phosphoglucosamine mutase, found in Synechococcus sp. (strain WH7803).